Consider the following 138-residue polypeptide: Basic phospholipase A2 homolog acutohaemolysin (138 aa).

The first 16 residues, 1–16, serve as a signal peptide directing secretion; the sequence is MRALWIVAVLLVGVEG. 7 cysteine pairs are disulfide-bonded: Cys-42–Cys-131, Cys-44–Cys-60, Cys-59–Cys-111, Cys-65–Cys-138, Cys-66–Cys-104, Cys-73–Cys-97, and Cys-91–Cys-102. The interval 121 to 133 is important for membrane-damaging activities in eukaryotes and bacteria; heparin-binding; sequence KSFRYHLKPSCKK.

Monomer. As to expression, expressed by the venom gland.

The protein resides in the secreted. In terms of biological role, snake venom phospholipase A2 homolog that lacks enzymatic activity. Is myotoxic. Has a strong indirect hemolytic activity and anticoagulant activity. A model of myotoxic mechanism has been proposed: an apo Lys49-PLA2 is activated by the entrance of a hydrophobic molecule (e.g. fatty acid) at the hydrophobic channel of the protein leading to a reorientation of a monomer. This reorientation causes a transition between 'inactive' to 'active' states, causing alignment of C-terminal and membrane-docking sites (MDoS) side-by-side and putting the membrane-disruption sites (MDiS) in the same plane, exposed to solvent and in a symmetric position for both monomers. The MDoS region stabilizes the toxin on membrane by the interaction of charged residues with phospholipid head groups. Subsequently, the MDiS region destabilizes the membrane with penetration of hydrophobic residues. This insertion causes a disorganization of the membrane, allowing an uncontrolled influx of ions (i.e. calcium and sodium), and eventually triggering irreversible intracellular alterations and cell death. The chain is Basic phospholipase A2 homolog acutohaemolysin from Deinagkistrodon acutus (Hundred-pace snake).